A 163-amino-acid polypeptide reads, in one-letter code: Nucleotide-binding protein DET1318 (163 aa).

The protein belongs to the YajQ family.

Functionally, nucleotide-binding protein. This chain is Nucleotide-binding protein DET1318, found in Dehalococcoides mccartyi (strain ATCC BAA-2266 / KCTC 15142 / 195) (Dehalococcoides ethenogenes (strain 195)).